Reading from the N-terminus, the 383-residue chain is tRNA-specific 2-thiouridylase MnmA (383 aa).

Residues Gly-9–Ser-16 and Met-35 each bind ATP. An interaction with target base in tRNA region spans residues Asn-95 to Asp-97. The Nucleophile role is filled by Cys-100. Cysteines 100 and 196 form a disulfide. Gly-124 serves as a coordination point for ATP. The interaction with tRNA stretch occupies residues Lys-146 to Gln-148. Residue Cys-196 is the Cysteine persulfide intermediate of the active site. The segment at Arg-308–Tyr-309 is interaction with tRNA.

This sequence belongs to the MnmA/TRMU family.

Its subcellular location is the cytoplasm. The enzyme catalyses S-sulfanyl-L-cysteinyl-[protein] + uridine(34) in tRNA + AH2 + ATP = 2-thiouridine(34) in tRNA + L-cysteinyl-[protein] + A + AMP + diphosphate + H(+). In terms of biological role, catalyzes the 2-thiolation of uridine at the wobble position (U34) of tRNA, leading to the formation of s(2)U34. This is tRNA-specific 2-thiouridylase MnmA from Burkholderia lata (strain ATCC 17760 / DSM 23089 / LMG 22485 / NCIMB 9086 / R18194 / 383).